Consider the following 231-residue polypeptide: Transcriptional regulatory protein KdpE (231 aa).

Positions 4 to 117 constitute a Response regulatory domain; it reads KILIIEDDHA…ELRARIRVIE (114 aa). The residue at position 53 (aspartate 53) is a 4-aspartylphosphate. The segment at residues 127 to 227 is a DNA-binding region (ompR/PhoB-type); the sequence is NIVFTNGLLS…HPRIGYQMLQ (101 aa).

In terms of processing, phosphorylated by KdpD. Phosphorylation is required for transcriptional activity.

Functionally, member of the two-component regulatory system KdpD/KdpE that regulates the transcription of a series of virulence factors through sensing external K(+) concentrations. Also regulates capsular polysaccharide synthesis. Upon phosphorylation by KpdD, functions as a transcriptional regulator by direct binding to promoter regions of target genes including spa, hla, aur and geh. Represses the transcription of kdpFABC operon. The sequence is that of Transcriptional regulatory protein KdpE from Staphylococcus aureus (strain NCTC 8325 / PS 47).